We begin with the raw amino-acid sequence, 289 residues long: BTB/POZ domain-containing protein KCTD7 (289 aa).

The disordered stretch occupies residues 1–35 (MVVVTGREPDSRRQDGAMSSSDAEDDFLEPATPTA). The 99-residue stretch at 51 to 149 (EVVPLNIGGA…QLENMQPLKG (99 aa)) folds into the BTB domain.

In terms of assembly, interacts with CUL3.

Its subcellular location is the cell membrane. It is found in the cytoplasm. It localises to the cytosol. May be involved in the control of excitability of cortical neurons. This chain is BTB/POZ domain-containing protein KCTD7 (KCTD7), found in Homo sapiens (Human).